A 514-amino-acid chain; its full sequence is ATP synthase subunit alpha (514 aa).

170–177 (GDRQIGKT) contacts ATP.

The protein belongs to the ATPase alpha/beta chains family. F-type ATPases have 2 components, CF(1) - the catalytic core - and CF(0) - the membrane proton channel. CF(1) has five subunits: alpha(3), beta(3), gamma(1), delta(1), epsilon(1). CF(0) has three main subunits: a(1), b(2) and c(9-12). The alpha and beta chains form an alternating ring which encloses part of the gamma chain. CF(1) is attached to CF(0) by a central stalk formed by the gamma and epsilon chains, while a peripheral stalk is formed by the delta and b chains.

Its subcellular location is the cell inner membrane. The enzyme catalyses ATP + H2O + 4 H(+)(in) = ADP + phosphate + 5 H(+)(out). In terms of biological role, produces ATP from ADP in the presence of a proton gradient across the membrane. The alpha chain is a regulatory subunit. The chain is ATP synthase subunit alpha from Ectopseudomonas mendocina (strain ymp) (Pseudomonas mendocina).